We begin with the raw amino-acid sequence, 878 residues long: Microtubule-associated protein homolog maph-1.1 (878 aa).

Disordered regions lie at residues 224 to 425 and 456 to 518; these read ALSD…AQAT and EIPP…PVVP. Low complexity-rich tracts occupy residues 241-268, 278-293, 310-321, and 328-339; these read PSARPATTTGTATRPTRPAVPAASAPRA, SRPTTTRNAAPAPRTA, APTRAPVPARSA, and APAKPAANTAKA. Composition is skewed to basic and acidic residues over residues 416–425 and 480–496; these read PPRHEVAQAT and EEDKIPEPVDAFKKPDP.

It belongs to the MAP1A/MAP1B/MAP1S family. Interacts with dlg-1.

Its subcellular location is the cell projection. It localises to the dendrite. It is found in the perikaryon. The protein resides in the axon. The protein localises to the cytoplasm. Its subcellular location is the cytoskeleton. The sequence is that of Microtubule-associated protein homolog maph-1.1 from Caenorhabditis elegans.